The primary structure comprises 94 residues: Co-chaperonin GroES (94 aa).

It belongs to the GroES chaperonin family. As to quaternary structure, heptamer of 7 subunits arranged in a ring. Interacts with the chaperonin GroEL.

The protein resides in the cytoplasm. Its function is as follows. Together with the chaperonin GroEL, plays an essential role in assisting protein folding. The GroEL-GroES system forms a nano-cage that allows encapsulation of the non-native substrate proteins and provides a physical environment optimized to promote and accelerate protein folding. GroES binds to the apical surface of the GroEL ring, thereby capping the opening of the GroEL channel. The sequence is that of Co-chaperonin GroES from Pediococcus pentosaceus (strain ATCC 25745 / CCUG 21536 / LMG 10740 / 183-1w).